A 414-amino-acid polypeptide reads, in one-letter code: Mini-circle putative transposase for IS117 (414 aa).

This Streptomyces coelicolor (strain ATCC BAA-471 / A3(2) / M145) protein is Mini-circle putative transposase for IS117.